A 199-amino-acid polypeptide reads, in one-letter code: FMN-dependent NADH:quinone oxidoreductase 1 (199 aa).

Residues S10, 17 to 19 (SNS), and 87 to 90 (MYNF) each bind FMN.

Belongs to the azoreductase type 1 family. In terms of assembly, homodimer. Requires FMN as cofactor.

The catalysed reaction is 2 a quinone + NADH + H(+) = 2 a 1,4-benzosemiquinone + NAD(+). It carries out the reaction N,N-dimethyl-1,4-phenylenediamine + anthranilate + 2 NAD(+) = 2-(4-dimethylaminophenyl)diazenylbenzoate + 2 NADH + 2 H(+). Its function is as follows. Quinone reductase that provides resistance to thiol-specific stress caused by electrophilic quinones. In terms of biological role, also exhibits azoreductase activity. Catalyzes the reductive cleavage of the azo bond in aromatic azo compounds to the corresponding amines. The polypeptide is FMN-dependent NADH:quinone oxidoreductase 1 (Mesoplasma florum (strain ATCC 33453 / NBRC 100688 / NCTC 11704 / L1) (Acholeplasma florum)).